A 137-amino-acid chain; its full sequence is MPTINQLVRKPRKSKVEKSKSPALNVGYNSHKKVQTNVSSPQKRGVATRVGTMTPRKPNSALRKFARVRLSNLIEVTAYIPGIGHNLQEHSVVLLRGGHVKDLPGVRYHIVRGALDTAGVNDRKQGRSKYGTKRPKA.

Disordered regions lie at residues Met1 to Ser21 and Lys33 to Lys57. At Asp102 the chain carries 3-methylthioaspartic acid.

Belongs to the universal ribosomal protein uS12 family. In terms of assembly, part of the 30S ribosomal subunit. Contacts proteins S8 and S17. May interact with IF1 in the 30S initiation complex.

Its function is as follows. With S4 and S5 plays an important role in translational accuracy. In terms of biological role, interacts with and stabilizes bases of the 16S rRNA that are involved in tRNA selection in the A site and with the mRNA backbone. Located at the interface of the 30S and 50S subunits, it traverses the body of the 30S subunit contacting proteins on the other side and probably holding the rRNA structure together. The combined cluster of proteins S8, S12 and S17 appears to hold together the shoulder and platform of the 30S subunit. In Streptococcus pneumoniae (strain ATCC 700669 / Spain 23F-1), this protein is Small ribosomal subunit protein uS12.